The primary structure comprises 291 residues: Beta-lactamase CTX-M-6 (291 aa).

The N-terminal stretch at 1-28 (MMTQSIRRSMLTVMATLPLLFSSATLHA) is a signal peptide. Ser-73 (acyl-ester intermediate) is an active-site residue. Residue 237 to 239 (KTG) participates in substrate binding.

It belongs to the class-A beta-lactamase family.

The catalysed reaction is a beta-lactam + H2O = a substituted beta-amino acid. Its function is as follows. Has cefotaxime-hydrolyzing activity. This chain is Beta-lactamase CTX-M-6 (bla), found in Salmonella typhimurium.